Reading from the N-terminus, the 84-residue chain is U4-theraphotoxin-Hhn1b (84 aa).

A signal peptide spans 1–22 (MKVTLIAILTCAAVLVLHTTAA). Residues 23-47 (EELEESQLMEVGMPDTELAAVDEER) constitute a propeptide that is removed on maturation. 3 cysteine pairs are disulfide-bonded: cysteine 51–cysteine 65, cysteine 55–cysteine 76, and cysteine 70–cysteine 81.

This sequence belongs to the neurotoxin 12 (Hwtx-2) family. 02 (Hwtx-2) subfamily. In terms of tissue distribution, expressed by the venom gland.

It localises to the secreted. Functionally, postsynaptic neurotoxin. This Cyriopagopus hainanus (Chinese bird spider) protein is U4-theraphotoxin-Hhn1b.